A 170-amino-acid polypeptide reads, in one-letter code: Non-classical export protein 102 (170 aa).

Over 1 to 11 (MLAIGDVILRA) the chain is Cytoplasmic. One can recognise an MARVEL domain in the interval 6–141 (DVILRAFNFV…TFIFIASAIF (136 aa)). A helical membrane pass occupies residues 12-32 (FNFVFLVIALGLTGSLAATTI). Residues 33–38 (TQHNPQ) are Extracellular-facing. Residues 39-61 (INFAVFAAAFGLLTSSFYGVFAY) form a helical membrane-spanning segment. Residues 62 to 76 (FVAAFAWPVILFVFD) lie on the Cytoplasmic side of the membrane. Residues 77–97 (FLNFVFTFAAATAIAAGIRAH) form a helical membrane-spanning segment. Over 98 to 125 (SCSNQDYLDDNNIAQGSSGRCRKAQAST) the chain is Extracellular. Residues 126-146 (AFLYFSTFIFIASAIFSAISL) form a helical membrane-spanning segment. The Cytoplasmic segment spans residues 147-170 (SKGGLFGHSSRPAPRTGVPTMSQV).

The protein belongs to the NCE102 family.

Its subcellular location is the cell membrane. Its function is as follows. Involved in membrane organization. Involved in a novel pathway of export of proteins that lack a cleavable signal sequence. Non-classical export pathway also functions as an alternative clearance/detoxification pathway to eliminate damaged material, when the basic repair pathway is not sufficient. Regulates actin organization and subsequent morphogenesis and pathogenesis. In Candida albicans (strain SC5314 / ATCC MYA-2876) (Yeast), this protein is Non-classical export protein 102.